Here is a 961-residue protein sequence, read N- to C-terminus: Outer capsid protein VP2 (961 aa).

This sequence belongs to the orbivirus VP2 family.

The protein resides in the virion. The VP2 protein is one of the two proteins (with VP5) which constitute the virus particle outer capsid. It is the major target of the host immunogenic response. Responsible for viral attachment to target host cell, probably by binding to sialic acid. This attachment induces virion internalization predominantly through clathrin-dependent endocytosis. In Bluetongue virus 1 (isolate South Africa vaccine) (BTV 1), this protein is Outer capsid protein VP2 (Segment-2).